Here is a 360-residue protein sequence, read N- to C-terminus: DNA replication and repair protein RecF (360 aa).

30–37 (GQNGSGKT) is a binding site for ATP.

It belongs to the RecF family.

Its subcellular location is the cytoplasm. Functionally, the RecF protein is involved in DNA metabolism; it is required for DNA replication and normal SOS inducibility. RecF binds preferentially to single-stranded, linear DNA. It also seems to bind ATP. This Shewanella oneidensis (strain ATCC 700550 / JCM 31522 / CIP 106686 / LMG 19005 / NCIMB 14063 / MR-1) protein is DNA replication and repair protein RecF.